A 146-amino-acid polypeptide reads, in one-letter code: Hemoglobin subunit beta (146 aa).

Residue Val1 is modified to N-acetylvaline. The Globin domain occupies 2-146 (HLSGEEKAAV…VANALAHKYH (145 aa)). Thr12 is modified (phosphothreonine). At Ser44 the chain carries Phosphoserine. Lys59 is subject to N6-acetyllysine. His63 lines the heme b pocket. N6-acetyllysine is present on Lys82. His92 serves as a coordination point for heme b. The residue at position 93 (Cys93) is an S-nitrosocysteine. The residue at position 144 (Lys144) is an N6-acetyllysine.

It belongs to the globin family. In terms of assembly, heterotetramer of two alpha chains and two beta chains. As to expression, red blood cells.

Functionally, involved in oxygen transport from the lung to the various peripheral tissues. This Pteropus alecto (Black flying fox) protein is Hemoglobin subunit beta (HBB).